The sequence spans 831 residues: DNA replication licensing factor MCM6 (831 aa).

The C4-type zinc finger occupies 155-182 (CLDCGSVIKNVEQQFKYTQPTICVSPTC). A disordered region spans residues 258-278 (GERAECRRDSSQQKSSTAGHE). Positions 259–268 (ERAECRRDSS) are enriched in basic and acidic residues. The 207-residue stretch at 345-551 (YFNKLVGSMA…VTDYHIAHHI (207 aa)) folds into the MCM domain. Residue 395-402 (GDPSCAKS) participates in ATP binding. The Arginine finger signature appears at 527–530 (SRFD). Positions 666 to 705 (SEYQDANGDNMDDTDDIENPVDGEEDQQNGAAEPASATAD) are disordered. The span at 675–692 (NMDDTDDIENPVDGEEDQ) shows a compositional bias: acidic residues.

It belongs to the MCM family. Component of the minichromosome maintenance (MCM) complex, a heterotetramer composed of MCM2, MCM3, MCM4, MCM5, MCM6 and MCM7. Interacts with ETG1. As to expression, expressed in shoot apex and flower buds.

The protein localises to the nucleus. The enzyme catalyses ATP + H2O = ADP + phosphate + H(+). In terms of biological role, probable component of the MCM2-7 complex (MCM complex) that may function as a DNA helicase and which is essential to undergo a single round of replication initiation and elongation per cell cycle in eukaryotic cells. This Arabidopsis thaliana (Mouse-ear cress) protein is DNA replication licensing factor MCM6 (MCM6).